The primary structure comprises 3763 residues: Colossin-B (3763 aa).

The first 19 residues, 1-19 (MKGSIFLLFIFQIFKFSSS), serve as a signal peptide directing secretion. N-linked (GlcNAc...) asparagine glycosylation is found at asparagine 43, asparagine 110, asparagine 258, and asparagine 284. In terms of domain architecture, Follistatin-like 1 spans 619–643 (DCSTLQCPSGYECKLDKNSKTRGCI). Residues asparagine 652 and asparagine 672 are each glycosylated (N-linked (GlcNAc...) asparagine). 2 Follistatin-like domains span residues 701-724 (HCRNVDCPKSHYCKIQRNGLPRCF) and 729-752 (PCEFVSCDCNLECRVTSCGDAKCF). The interval 792–832 (PPIFYETPSPTSAPPTETPSPTDTPTDKPTIPPTPTPTPSK) is disordered. The span at 810-820 (PSPTDTPTDKP) shows a compositional bias: low complexity. N-linked (GlcNAc...) asparagine glycans are attached at residues asparagine 845 and asparagine 991. Disordered regions lie at residues 1033–1068 (LGSSGSGSSGNSGSSGSGGSSNDSTESQWSSESESS) and 1095–1124 (PQPTPSTDIPTTTTTTTSTSTTGPIEPTST). The span at 1036-1051 (SGSGSSGNSGSSGSGG) shows a compositional bias: gly residues. 2 stretches are compositionally biased toward low complexity: residues 1052–1068 (SSNDSTESQWSSESESS) and 1099–1124 (PSTDIPTTTTTTTSTSTTGPIEPTST). N-linked (GlcNAc...) asparagine glycosylation is present at asparagine 1054. One can recognise a CNA-B 1 domain in the interval 1159-1227 (VSGVEITLIQ…LLNKYPIDTS (69 aa)). 2 N-linked (GlcNAc...) asparagine glycosylation sites follow: asparagine 1229 and asparagine 1247. The CNA-B 2 domain occupies 1304–1373 (IKGIQVTLKD…VYTMDTFQLS (70 aa)). N-linked (GlcNAc...) asparagine glycosylation occurs at asparagine 1381. CNA-B domains lie at 1437–1515 (LPGV…IDTK), 1582–1648 (VPGI…LTLD), and 1731–1809 (VGGV…FTLS). 2 N-linked (GlcNAc...) asparagine glycosylation sites follow: asparagine 1769 and asparagine 1815. Residues 1883–1955 (GSTVDGGTSV…SEQPPEDSME (73 aa)) are disordered. Residues 1898-1948 (STSTTTVSSSPSSSSDIGSSSDISSEVSSSLSSSPSSSEQPSEQSSSSSEQ) show a composition bias toward low complexity. A CNA-B 6 domain is found at 2015–2083 (VPDVTVTLVN…DPLSGKIDFN (69 aa)). N-linked (GlcNAc...) asparagine glycosylation is found at asparagine 2128, asparagine 2145, asparagine 2243, asparagine 2294, asparagine 2351, asparagine 2378, asparagine 2453, asparagine 2493, asparagine 2496, asparagine 2516, asparagine 2572, asparagine 2601, asparagine 2624, asparagine 2668, asparagine 2698, asparagine 2714, asparagine 2781, asparagine 2787, asparagine 2800, asparagine 2838, and asparagine 2858. Residues 2143–2197 (FPNITVRLFDQNLQPVLDNFNIQVEPTVTNALGQYYFDNLHSGSYIVKFEVPTRY) enclose the CNA-B 7 domain. A CNA-B 8 domain is found at 2292 to 2345 (VPNVTVEIFNPTGQQVYNINELLIGSTTTDSNGYYLFDEIQPGSYIIKFSNIPN). The CNA-B 9 domain occupies 2453–2477 (NTTTTDQNGLYYFDNLSPGLYKLLF). Residues 2713–2766 (VNGTIVTLLDINGNTMVDADSYPINSYTTGPDGYYKFDDFSFGKYIITFSGVPD) form the CNA-B 10 domain. Residues 2984–3061 (LGGVVVTLYN…DSNASPVDGY (78 aa)) form the CNA-B 11 domain. N-linked (GlcNAc...) asparagine glycans are attached at residues asparagine 3083, asparagine 3130, asparagine 3372, asparagine 3390, asparagine 3459, asparagine 3466, asparagine 3557, asparagine 3666, asparagine 3676, and asparagine 3681. One can recognise a CNA-B 12 domain in the interval 3128 to 3201 (YPNITVSIYT…TKTGVNLGII (74 aa)). The region spanning 3664–3733 (MANITVQLFS…NDKRDLEKIN (70 aa)) is the CNA-B 13 domain.

It belongs to the serine-aspartate repeat-containing protein (SDr) family.

Its subcellular location is the secreted. In Dictyostelium discoideum (Social amoeba), this protein is Colossin-B (colB).